The sequence spans 358 residues: Putative hydrogenase expression/formation protein MJ0993 (358 aa).

Fe cation is bound by residues C33, C61, and C64.

Belongs to the HypD family.

The polypeptide is Putative hydrogenase expression/formation protein MJ0993 (Methanocaldococcus jannaschii (strain ATCC 43067 / DSM 2661 / JAL-1 / JCM 10045 / NBRC 100440) (Methanococcus jannaschii)).